The sequence spans 184 residues: Probable RNA 2'-phosphotransferase (184 aa).

This sequence belongs to the KptA/TPT1 family.

Removes the 2'-phosphate from RNA via an intermediate in which the phosphate is ADP-ribosylated by NAD followed by a presumed transesterification to release the RNA and generate ADP-ribose 1''-2''-cyclic phosphate (APPR&gt;P). May function as an ADP-ribosylase. This Escherichia coli O8 (strain IAI1) protein is Probable RNA 2'-phosphotransferase.